We begin with the raw amino-acid sequence, 376 residues long: Chaperone protein DnaJ (376 aa).

A J domain is found at 5-69 (DYYEVLGVSK…QKRAQYDQYG (65 aa)). The CR-type zinc-finger motif lies at 133-215 (GKDAEIEIPR…CHGKGRVTKT (83 aa)). Positions 146, 149, 163, 166, 189, 192, 203, and 206 each coordinate Zn(2+). 4 CXXCXGXG motif repeats span residues 146 to 153 (CDTCHGSG), 163 to 170 (CSHCGGKG), 189 to 196 (CQYCNGTG), and 203 to 210 (CPTCHGKG).

This sequence belongs to the DnaJ family. As to quaternary structure, homodimer. The cofactor is Zn(2+).

It localises to the cytoplasm. Functionally, participates actively in the response to hyperosmotic and heat shock by preventing the aggregation of stress-denatured proteins and by disaggregating proteins, also in an autonomous, DnaK-independent fashion. Unfolded proteins bind initially to DnaJ; upon interaction with the DnaJ-bound protein, DnaK hydrolyzes its bound ATP, resulting in the formation of a stable complex. GrpE releases ADP from DnaK; ATP binding to DnaK triggers the release of the substrate protein, thus completing the reaction cycle. Several rounds of ATP-dependent interactions between DnaJ, DnaK and GrpE are required for fully efficient folding. Also involved, together with DnaK and GrpE, in the DNA replication of plasmids through activation of initiation proteins. The protein is Chaperone protein DnaJ of Listeria monocytogenes serotype 4b (strain CLIP80459).